A 372-amino-acid polypeptide reads, in one-letter code: Aminomethyltransferase (372 aa).

It belongs to the GcvT family. As to quaternary structure, the glycine cleavage system is composed of four proteins: P, T, L and H.

It catalyses the reaction N(6)-[(R)-S(8)-aminomethyldihydrolipoyl]-L-lysyl-[protein] + (6S)-5,6,7,8-tetrahydrofolate = N(6)-[(R)-dihydrolipoyl]-L-lysyl-[protein] + (6R)-5,10-methylene-5,6,7,8-tetrahydrofolate + NH4(+). Its function is as follows. The glycine cleavage system catalyzes the degradation of glycine. This Synechococcus elongatus (strain ATCC 33912 / PCC 7942 / FACHB-805) (Anacystis nidulans R2) protein is Aminomethyltransferase.